The primary structure comprises 1207 residues: DNA-directed RNA polymerase subunit beta' (1207 aa).

4 residues coordinate Zn(2+): Cys-60, Cys-62, Cys-75, and Cys-78. Residues Asp-449, Asp-451, and Asp-453 each contribute to the Mg(2+) site. Residues Cys-822, Cys-896, Cys-903, and Cys-906 each contribute to the Zn(2+) site.

This sequence belongs to the RNA polymerase beta' chain family. In terms of assembly, the RNAP catalytic core consists of 2 alpha, 1 beta, 1 beta' and 1 omega subunit. When a sigma factor is associated with the core the holoenzyme is formed, which can initiate transcription. Mg(2+) serves as cofactor. It depends on Zn(2+) as a cofactor.

The catalysed reaction is RNA(n) + a ribonucleoside 5'-triphosphate = RNA(n+1) + diphosphate. Its function is as follows. DNA-dependent RNA polymerase catalyzes the transcription of DNA into RNA using the four ribonucleoside triphosphates as substrates. The protein is DNA-directed RNA polymerase subunit beta' of Staphylococcus aureus (strain NCTC 8325 / PS 47).